The following is a 97-amino-acid chain: Defensin-A2 (97 aa).

Residues 1 to 19 (MRTLSLLLALLFLAAQTLA) form the signal peptide. Residues 20-61 (QPIDEGAEEVITEEPEITETQDPTTIMLIERGIGGDSTDATR) constitute a propeptide that is removed on maturation. 3 disulfides stabilise this stretch: Cys66-Cys93, Cys68-Cys82, and Cys72-Cys92. A propeptide spanning residues 96-97 (TS) is cleaved from the precursor.

It belongs to the alpha-defensin family. In terms of tissue distribution, highly expressed in intestine, expressed at lower levels in spleen, and at very low levels in kidney and lung.

It localises to the secreted. In terms of biological role, has antimicrobial activity. This Ornithorhynchus anatinus (Duckbill platypus) protein is Defensin-A2.